The sequence spans 323 residues: NADH-ubiquinone oxidoreductase chain 1 (323 aa).

8 consecutive transmembrane segments (helical) span residues 8–28 (LLNP…LTLI), 74–94 (LLFI…WLPL), 105–125 (LGML…LGSG), 150–170 (SLGL…LTTF), 176–196 (TIWL…STLA), 227–247 (LFFL…TILF), 258–278 (ELTS…FLWV), and 298–318 (FLPI…FTGS).

The protein belongs to the complex I subunit 1 family.

The protein localises to the mitochondrion inner membrane. It carries out the reaction a ubiquinone + NADH + 5 H(+)(in) = a ubiquinol + NAD(+) + 4 H(+)(out). Its function is as follows. Core subunit of the mitochondrial membrane respiratory chain NADH dehydrogenase (Complex I) that is believed to belong to the minimal assembly required for catalysis. Complex I functions in the transfer of electrons from NADH to the respiratory chain. The immediate electron acceptor for the enzyme is believed to be ubiquinone. The protein is NADH-ubiquinone oxidoreductase chain 1 (MT-ND1) of Latimeria chalumnae (Coelacanth).